A 209-amino-acid polypeptide reads, in one-letter code: Casparian strip membrane protein 1 (209 aa).

Residues 1–46 (MSSGANATTIDVPETRAEAKGKAPLIAAPIVATTKATPHPNAGWKK) are Cytoplasmic-facing. The chain crosses the membrane as a helical span at residues 47–67 (GLAIFDFLLRLAAIAATLAAA). The Extracellular portion of the chain corresponds to 68–95 (TTMGTTDETLPFFTQFFQFQASFDDLPA). Residues 96–116 (FMFFVVATAIASGYLALSLPF) form a helical membrane-spanning segment. Topologically, residues 117-137 (SLVSIFRPHAQGIRLLLIISD) are cytoplasmic. The helical transmembrane segment at 138–158 (TVMLALTTAGAASATAIVYLA) threads the bilayer. At 159–183 (HNGDSSANWIAICQQFTDFCQSVSG) the chain is on the extracellular side. Residues 184 to 204 (AVVASFIAVVIFMLLVMMSAL) form a helical membrane-spanning segment. Residues 205 to 209 (ALRKH) lie on the Cytoplasmic side of the membrane.

It belongs to the Casparian strip membrane proteins (CASP) family. Homodimer and heterodimers.

The protein resides in the cell membrane. In terms of biological role, regulates membrane-cell wall junctions and localized cell wall deposition. Required for establishment of the Casparian strip membrane domain (CSD) and the subsequent formation of Casparian strips, a cell wall modification of the root endodermis that determines an apoplastic barrier between the intraorganismal apoplasm and the extraorganismal apoplasm and prevents lateral diffusion. This Vitis vinifera (Grape) protein is Casparian strip membrane protein 1.